A 312-amino-acid polypeptide reads, in one-letter code: tRNA-cytidine(32) 2-sulfurtransferase (312 aa).

The short motif at 39 to 44 (SGGKDS) is the PP-loop motif element. Residues Cys-114, Cys-117, and Cys-205 each coordinate [4Fe-4S] cluster.

The protein belongs to the TtcA family. Homodimer. The cofactor is Mg(2+). Requires [4Fe-4S] cluster as cofactor.

The protein localises to the cytoplasm. It catalyses the reaction cytidine(32) in tRNA + S-sulfanyl-L-cysteinyl-[cysteine desulfurase] + AH2 + ATP = 2-thiocytidine(32) in tRNA + L-cysteinyl-[cysteine desulfurase] + A + AMP + diphosphate + H(+). The protein operates within tRNA modification. Its function is as follows. Catalyzes the ATP-dependent 2-thiolation of cytidine in position 32 of tRNA, to form 2-thiocytidine (s(2)C32). The sulfur atoms are provided by the cysteine/cysteine desulfurase (IscS) system. This chain is tRNA-cytidine(32) 2-sulfurtransferase, found in Ralstonia nicotianae (strain ATCC BAA-1114 / GMI1000) (Ralstonia solanacearum).